A 258-amino-acid polypeptide reads, in one-letter code: Pimeloyl-[acyl-carrier protein] methyl ester esterase (258 aa).

One can recognise an AB hydrolase-1 domain in the interval 16 to 242; the sequence is LVLLHGWGLN…AAHAPFISHP (227 aa). Substrate is bound by residues Trp22, 82 to 83, and 143 to 147; these read SL and FLALQ. Ser82 (nucleophile) is an active-site residue. Residues Asp207 and His235 contribute to the active site. His235 provides a ligand contact to substrate.

This sequence belongs to the AB hydrolase superfamily. Carboxylesterase BioH family. As to quaternary structure, monomer.

The protein localises to the cytoplasm. It catalyses the reaction 6-carboxyhexanoyl-[ACP] methyl ester + H2O = 6-carboxyhexanoyl-[ACP] + methanol + H(+). Its pathway is cofactor biosynthesis; biotin biosynthesis. Its function is as follows. The physiological role of BioH is to remove the methyl group introduced by BioC when the pimeloyl moiety is complete. It allows to synthesize pimeloyl-ACP via the fatty acid synthetic pathway through the hydrolysis of the ester bonds of pimeloyl-ACP esters. The chain is Pimeloyl-[acyl-carrier protein] methyl ester esterase from Edwardsiella ictaluri (strain 93-146).